The following is a 514-amino-acid chain: Cytochrome P450 monooxygenase FUS8 (514 aa).

A helical transmembrane segment spans residues 24–44 (VFENLTVTNTVCAFIALFIIV). Asn225 and Asn443 each carry an N-linked (GlcNAc...) asparagine glycan. Cys460 provides a ligand contact to heme.

This sequence belongs to the cytochrome P450 family. Requires heme as cofactor.

The protein localises to the membrane. The protein operates within mycotoxin biosynthesis. Cytochrome P450 monooxygenase; part of the gene cluster that mediates the biosynthesis of the mycotoxin fusarin C. Within the cluster, FUS1, FUS2, FUS8 and FUS9 are sufficient for fusarin production. The roles of the other FUS members are yet undetermined. The fusarin C synthetase FUS1 is responsible for the condensation of one acetyl-coenzyme A (CoA) unit with six malonyl-CoA units and the amide linkage of the arising heptaketide and homoserine, subsequently releasing the first intermediate, prefusarin, as an alcohol with an open ring structure. The cytochrome P450 monooxygenase FUS8 participates in multiple oxidation processes at carbon C-20 and is able to use the FUS1 product as substrate, resulting in formation of 20-hydroxy-prefusarin. This reaction seems to be essential before the 2-pyrrolidone ring closure can be catalyzed by FUS2, generating 20-hydroxy-fusarin. FUS8 is able to further oxidizes carbon C-20 after ring closure, resulting in the formation of carboxy-fusarin C. As the last step, FUS9 methylates the hydroxyl group at C-21 to generate fusarin C. Fusarin C can then rearrange to epi-fusarin C, the (z)-isomers, and fusarin A and fusarin D. This Gibberella fujikuroi (strain CBS 195.34 / IMI 58289 / NRRL A-6831) (Bakanae and foot rot disease fungus) protein is Cytochrome P450 monooxygenase FUS8.